The sequence spans 86 residues: Polcalcin Che a 3 (86 aa).

EF-hand domains lie at 8–43 and 43–78; these read QDIA…LGSV and VTPD…NRGL. Ca(2+) contacts are provided by aspartate 21, asparagine 23, aspartate 25, lysine 27, glutamate 32, aspartate 56, aspartate 58, aspartate 60, and glutamate 67.

In Chenopodium album (Fat hen), this protein is Polcalcin Che a 3.